A 769-amino-acid polypeptide reads, in one-letter code: Cullin-3 (769 aa).

The disordered stretch occupies residues 614–655 (DRELPSTTSSTTTTTTTATSSSTSTSPSSSSSSISTPTPSKS). Positions 618–653 (PSTTSSTTTTTTTATSSSTSTSPSSSSSSISTPTPS) are enriched in low complexity. The region spanning 699–761 (DRKHQIEASI…REYLERSKQD (63 aa)) is the Cullin neddylation domain. Residue lysine 713 forms a Glycyl lysine isopeptide (Lys-Gly) (interchain with G-Cter in NEDD8) linkage.

It belongs to the cullin family. Post-translationally, neddylated. Deneddylated via its interaction with the COP9 signalosome (CSN) complex.

Its subcellular location is the nucleus. The protein operates within protein modification; protein ubiquitination. Functionally, probable core component of cullin-based SCF-like E3 ubiquitin-protein ligase complexes which mediate the ubiquitination and subsequent proteasomal degradation of target proteins. The E3 ubiquitin-protein ligase activity of the complex is dependent on the neddylation of the cullin subunit. The polypeptide is Cullin-3 (culC) (Dictyostelium discoideum (Social amoeba)).